Consider the following 248-residue polypeptide: 4-hydroxy-tetrahydrodipicolinate reductase (248 aa).

NAD(+) is bound by residues Asp-32, 74-76 (GTT), and 99-102 (SANF). Catalysis depends on His-134, which acts as the Proton donor/acceptor. Residue His-135 coordinates (S)-2,3,4,5-tetrahydrodipicolinate. The Proton donor role is filled by Lys-138. Residue 144 to 145 (GT) participates in (S)-2,3,4,5-tetrahydrodipicolinate binding.

The protein belongs to the DapB family.

The protein localises to the cytoplasm. It catalyses the reaction (S)-2,3,4,5-tetrahydrodipicolinate + NAD(+) + H2O = (2S,4S)-4-hydroxy-2,3,4,5-tetrahydrodipicolinate + NADH + H(+). The enzyme catalyses (S)-2,3,4,5-tetrahydrodipicolinate + NADP(+) + H2O = (2S,4S)-4-hydroxy-2,3,4,5-tetrahydrodipicolinate + NADPH + H(+). The protein operates within amino-acid biosynthesis; L-lysine biosynthesis via DAP pathway; (S)-tetrahydrodipicolinate from L-aspartate: step 4/4. Catalyzes the conversion of 4-hydroxy-tetrahydrodipicolinate (HTPA) to tetrahydrodipicolinate. The protein is 4-hydroxy-tetrahydrodipicolinate reductase of Chlorobium limicola (strain DSM 245 / NBRC 103803 / 6330).